A 405-amino-acid chain; its full sequence is Aspartokinase (405 aa).

ATP is bound at residue 7–10; that stretch reads KYGG. 25–30 serves as a coordination point for substrate; the sequence is RIAHYR. S41 is an ATP binding site. Residues 47 to 49, E74, 125 to 126, 150 to 153, and S153 each bind substrate; these read TDE, LE, and RGGS. Residues 173-174, 179-184, and R209 contribute to the ATP site; these read TD and YTTDPH. 2 consecutive ACT domains span residues 263-342 and 344-405; these read IGLI…IAKV and IVGV…LDKA. Substrate-binding positions include D270, 288–290, Q294, 355–356, 369–370, and 376–377; these read AVD, VP, NI, and SE.

It belongs to the aspartokinase family. In terms of assembly, tetramer consisting of 2 isoforms Alpha (catalytic and regulation) and of a homodimer of 2 isoforms Beta (regulation).

It catalyses the reaction L-aspartate + ATP = 4-phospho-L-aspartate + ADP. Its pathway is amino-acid biosynthesis; L-lysine biosynthesis via DAP pathway; (S)-tetrahydrodipicolinate from L-aspartate: step 1/4. The protein operates within amino-acid biosynthesis; L-methionine biosynthesis via de novo pathway; L-homoserine from L-aspartate: step 1/3. It participates in amino-acid biosynthesis; L-threonine biosynthesis; L-threonine from L-aspartate: step 1/5. Functionally, catalyzes the phosphorylation of the beta-carboxyl group of aspartic acid with ATP to yield 4-phospho-L-aspartate, which is involved in the branched biosynthetic pathway leading to the biosynthesis of amino acids lysine, threonine, isoleucine and methionine. This chain is Aspartokinase (ask), found in Thermus thermophilus (strain ATCC BAA-163 / DSM 7039 / HB27).